Here is a 444-residue protein sequence, read N- to C-terminus: Tol-Pal system protein TolB (444 aa).

The signal sequence occupies residues 1-19 (MRNIIYFILSLLFSVTSYA).

It belongs to the TolB family. In terms of assembly, the Tol-Pal system is composed of five core proteins: the inner membrane proteins TolA, TolQ and TolR, the periplasmic protein TolB and the outer membrane protein Pal. They form a network linking the inner and outer membranes and the peptidoglycan layer.

It localises to the periplasm. Functionally, part of the Tol-Pal system, which plays a role in outer membrane invagination during cell division and is important for maintaining outer membrane integrity. In Rickettsia conorii (strain ATCC VR-613 / Malish 7), this protein is Tol-Pal system protein TolB.